A 212-amino-acid polypeptide reads, in one-letter code: Photosynthetic NDH subunit of subcomplex B 5, chloroplastic (212 aa).

A chloroplast-targeting transit peptide spans 1–48; that stretch reads MATVTILSPKSIPKVTDSKFGARVSDQIVNVVKCGKSGRRLKLAKLVS. Transmembrane regions (helical) follow at residues 115-135 and 136-156; these read FQGL…YFDA and PGEY…IIEM.

Part of the chloroplast NDH complex, composed of a mixture of chloroplast and nucleus encoded subunits. Component of the NDH subcomplex B, at least composed of PnsB1, PnsB2, PnsB3, PnsB4 and PnsB5.

It localises to the plastid. The protein localises to the chloroplast membrane. NDH shuttles electrons from NAD(P)H:plastoquinone, via FMN and iron-sulfur (Fe-S) centers, to quinones in the photosynthetic chain and possibly in a chloroplast respiratory chain. The immediate electron acceptor for the enzyme in this species is believed to be plastoquinone. Couples the redox reaction to proton translocation, and thus conserves the redox energy in a proton gradient. This is Photosynthetic NDH subunit of subcomplex B 5, chloroplastic from Arabidopsis thaliana (Mouse-ear cress).